We begin with the raw amino-acid sequence, 893 residues long: POU domain protein 2, isoform B (893 aa).

Residues 586–668 (QMKQQQREDP…STPKPTSGLT (83 aa)) form a disordered region. A compositionally biased stretch (low complexity) spans 602–617 (PLAKSPLRSPSLSPVP). The span at 623-646 (QQRTPPNSMTANSLGMSSAVMTPN) shows a compositional bias: polar residues. Residues 647 to 665 (TPSMQQQPQLQQSTPKPTS) are compositionally biased toward low complexity. Positions 681 to 755 (EETTDLEELE…LLQKWLEDAD (75 aa)) constitute a POU-specific domain. Residues 786 to 845 (RRKKRTSIETTVRTTLEKAFLMNCKPTSEEISQLSERLNMDKEVIRVWFCNRRQKEKRIN) constitute a DNA-binding region (homeobox).

It belongs to the POU transcription factor family. Class-2 subfamily. As to expression, initial expression in cellular blastoderm stage, then in ectodermal stripes during germband extension. Broad expression in the neuroectoderm followed by limitation to discrete subsets of CNS cells, and expression in specific PNS neurons and support cells.

It is found in the nucleus. DNA-binding regulatory protein implicated in early development. Involved in neuronal cell fate decision. May act as an octamer-dependent activator of transcription. Could also play an early role in specific ectodermal cells, and a subsequent role in the embryonic nervous system. This is POU domain protein 2, isoform B from Drosophila melanogaster (Fruit fly).